The chain runs to 196 residues: DnaA initiator-associating protein DiaA (196 aa).

One can recognise an SIS domain in the interval 34-196; that stretch reads LVQSLLNGNK…DNTLFPHQDD (163 aa).

The protein belongs to the SIS family. DiaA subfamily. Homotetramer; dimer of dimers.

In terms of biological role, required for the timely initiation of chromosomal replication via direct interactions with the DnaA initiator protein. In Shigella boydii serotype 18 (strain CDC 3083-94 / BS512), this protein is DnaA initiator-associating protein DiaA.